The chain runs to 1231 residues: uncharacterized protein (1231 aa).

Disordered stretches follow at residues 171–197 (LKPDESIKSSMKKNVDGTGDSNKQHDD), 210–259 (DESF…HLPT), and 389–547 (ASPR…RSSR). Residues 440–450 (RSRHSHKRRSI) are compositionally biased toward basic residues. 4 positions are modified to phosphoserine: Ser-449, Ser-451, Ser-453, and Ser-455. A compositionally biased stretch (basic residues) spans 458–502 (RGGRRAVRRSRSRSPRRSYNRGSTRSRSRSMRHRSRSPAHYRGRG). A compositionally biased stretch (basic and acidic residues) spans 503–541 (RGREPASKERGSSSRDFGGRHSLQRERERSSEYYHRNEG). A Phosphotyrosine modification is found at Tyr-549. 3 disordered regions span residues 570–591 (KTSSISPTASSNKEKEKEASEP), 950–981 (PNLDRDMSSMPINKQRRGRNTPSIMLDDDDEE), and 1058–1203 (TLSK…PPFN). Ser-573 and Ser-589 each carry phosphoserine. A Phosphothreonine modification is found at Thr-970. Residue Ser-972 is modified to Phosphoserine. The span at 1076-1103 (YMMNQQHGAPNAQNAPNLGQNPGQNLGQ) shows a compositional bias: polar residues. Residues 1118 to 1127 (QQQQQQQQQQ) are compositionally biased toward low complexity. Over residues 1178–1203 (PPGPGGYVGPPPNPWASNVPPQPPFN) the composition is skewed to pro residues.

This is an uncharacterized protein from Drosophila melanogaster (Fruit fly).